A 95-amino-acid polypeptide reads, in one-letter code: Cell division topological specificity factor (95 aa).

Belongs to the MinE family.

Its function is as follows. Prevents the cell division inhibition by proteins MinC and MinD at internal division sites while permitting inhibition at polar sites. This ensures cell division at the proper site by restricting the formation of a division septum at the midpoint of the long axis of the cell. The polypeptide is Cell division topological specificity factor (Trichodesmium erythraeum (strain IMS101)).